We begin with the raw amino-acid sequence, 145 residues long: Partner of bursicon (145 aa).

The N-terminal stretch at 1–28 (MKENFSIMFIHSIFLILIIFIYSNETIA) is a signal peptide. Disulfide bonds link C36–C94, C60–C109, C69–C135, C73–C137, and C91–C140. The region spanning 36–131 (CETLQSEVHI…NGVMEIKIRE (96 aa)) is the CTCK domain.

Heterodimer of burs and pburs.

It is found in the secreted. Final heterodimeric neurohormone released at the end of the molting cycle, involved in the sclerotization (tanning) of the insect cuticle, melanization and wing spreading. The protein is Partner of bursicon (pburs) of Apis mellifera (Honeybee).